A 311-amino-acid polypeptide reads, in one-letter code: MNSLPEDLLAMILVKLPIKIFTTFKIVCTQWESMVDSPYFRDLFLSIHQNSHYSSWSILSRCDEEVIAHYGCNTWGLQRSLHFYISSFLTKKFETQRNNYKVWSYSTDVGMILISENCICVKNRSLYVANPVSQECVEIPSHGYLKKVSCPLGIATRTENGVLLDYKVVLFNGSDTFRRLLIYSSQTGMWSINTVDLTVSGFHNQSPISLHGSIHWIASTSHSEDVAVSFDLYATGTSSVQCRVTTFPDFGKHPKFTRSFSTCQGSLMYMNIISITKVDGSLEIISARLYWFLKEKNGRKVLPQCQPTPLS.

The F-box domain maps to 1 to 43 (MNSLPEDLLAMILVKLPIKIFTTFKIVCTQWESMVDSPYFRDL).

The polypeptide is Putative F-box protein At3g28280 (Arabidopsis thaliana (Mouse-ear cress)).